The chain runs to 364 residues: Aminomethyltransferase (364 aa).

Belongs to the GcvT family. The glycine cleavage system is composed of four proteins: P, T, L and H.

It carries out the reaction N(6)-[(R)-S(8)-aminomethyldihydrolipoyl]-L-lysyl-[protein] + (6S)-5,6,7,8-tetrahydrofolate = N(6)-[(R)-dihydrolipoyl]-L-lysyl-[protein] + (6R)-5,10-methylene-5,6,7,8-tetrahydrofolate + NH4(+). Its function is as follows. The glycine cleavage system catalyzes the degradation of glycine. This Salmonella arizonae (strain ATCC BAA-731 / CDC346-86 / RSK2980) protein is Aminomethyltransferase.